A 236-amino-acid chain; its full sequence is CD81 antigen (236 aa).

Residues 1–12 are Cytoplasmic-facing; the sequence is MGVEGCTKCIKY. A helical membrane pass occupies residues 13-33; sequence LLFVFNFVFWLAGGVILGVAL. The Extracellular segment spans residues 34 to 63; sequence WLRHDPQTTNLLYLELGDKPAPNTFYVGIY. Residues 64–84 form a helical membrane-spanning segment; the sequence is ILIAVGAVMMFVGFLGCYGAI. The Cytoplasmic segment spans residues 85–89; it reads QESQC. The chain crosses the membrane as a helical span at residues 90–112; sequence LLGTFFTCLVILFACEVAAGIWG. Residues 113–201 are Extracellular-facing; that stretch reads FVNKDQIAKD…QKIDDLFSGK (89 aa). 2 disulfide bridges follow: C156–C190 and C157–C175. Residues 202–224 form a helical membrane-spanning segment; the sequence is LYLIGIAAIVVAVIMIFEMILSM. Residue E219 coordinates cholesterol. Topologically, residues 225–236 are cytoplasmic; the sequence is VLCCGIRNSSVY.

The protein belongs to the tetraspanin (TM4SF) family. Homodimer. Part of a complex composed of CD19, CR2/CD21, CD81 and IFITM1/CD225 in the membrane of mature B cells. Interacts (via the second extracellular domain) with CD19; this interaction is initiated early during biosynthesis in the ER and enables trafficking of only properly folded CD19. Part of a complex that includes MHC class II/HLA-DR molecules and IFITM1. Interacts with IFITM1. Interacts with IFITM2 and IFITM3. Part of integrin-tetraspanin complex composed of CD9, CD81, beta-1 and beta-2 integrins in the membrane of monocyte/macrophages. Interacts (via the second extracellular domain) with integrin ITGAV:ITGB3. Interacts with CD247/CD3 zeta, ICAM1 and CD9 at the immune synapse on T cell membrane. Part of a GPCR-tetraspanin complex consisting at least of ADGRG1, CD81, possibly CD9, and GNA11 in which CD81 enhances the association of ADGRG1 with GNA11. Part of a complex composed of CD9, CD81, PTGFRN and IGSF8. Interacts directly with IGSF8. Interacts with CD53 and SCIMP. Interacts with SAMHD1 (via its C-terminus). Interacts with glypican GPC3 and with the transcriptional repressor HHEX; binding to GPC3 decreases the availability of free CD81 for binding to HHEX, resulting in nuclear translocation of HHEX and transcriptional repression. Interacts with CLDN1. Interacts with CLDN6 and CLDN9. Not glycosylated. Post-translationally, likely constitutively palmitoylated at low levels. Protein palmitoylation is up-regulated upon coligation of BCR and CD9-C2R-CD81 complexes in lipid rafts.

It localises to the cell membrane. It is found in the basolateral cell membrane. Functionally, structural component of specialized membrane microdomains known as tetraspanin-enriched microdomains (TERMs), which act as platforms for receptor clustering and signaling. Essential for trafficking and compartmentalization of CD19 receptor on the surface of activated B cells. Upon initial encounter with microbial pathogens, enables the assembly of CD19-CR2/CD21 and B cell receptor (BCR) complexes at signaling TERMs, lowering the threshold dose of antigen required to trigger B cell clonal expansion and antibody production. In T cells, facilitates the localization of CD247/CD3 zeta at antigen-induced synapses with B cells, providing for costimulation and polarization toward T helper type 2 phenotype. Present in MHC class II compartments, may also play a role in antigen presentation. Can act both as positive and negative regulator of homotypic or heterotypic cell-cell fusion processes. Positively regulates sperm-egg fusion and may be involved in acrosome reaction. In myoblasts, associates with CD9 and PTGFRN and inhibits myotube fusion during muscle regeneration. In macrophages, associates with CD9 and beta-1 and beta-2 integrins, and prevents macrophage fusion into multinucleated giant cells specialized in ingesting complement-opsonized large particles. Also prevents the fusion of mononuclear cell progenitors into osteoclasts in charge of bone resorption. May regulate the compartmentalization of enzymatic activities. In T cells, defines the subcellular localization of dNTPase SAMHD1 and permits its degradation by the proteasome, thereby controlling intracellular dNTP levels. Also involved in cell adhesion and motility. Positively regulates integrin-mediated adhesion of macrophages, particularly relevant for the inflammatory response in the lung. The sequence is that of CD81 antigen (CD81) from Pan troglodytes (Chimpanzee).